A 47-amino-acid chain; its full sequence is Large ribosomal subunit protein bL33 (47 aa).

This sequence belongs to the bacterial ribosomal protein bL33 family.

The polypeptide is Large ribosomal subunit protein bL33 (Staphylococcus capitis).